The chain runs to 465 residues: Uridine kinase-like protein 5 (465 aa).

A uridine kinase region spans residues 26 to 230 (LKQPFVIGVA…IVQHIRTKLC (205 aa)). Residues 240 to 465 (NIFIISSTFQ…SLSTNLKLRS (226 aa)) are uracil phosphoribosyltransferase. GTP contacts are provided by residues lysine 264, arginine 273, and 307–310 (CKRL). 5-phospho-alpha-D-ribose 1-diphosphate is bound by residues arginine 317 and arginine 342. Residue arginine 362 participates in GTP binding. Residues aspartate 368, 373–376 (SGYS), and glutamate 439 each bind 5-phospho-alpha-D-ribose 1-diphosphate. A uracil-binding site is contributed by 438-440 (GEF).

The protein in the N-terminal section; belongs to the uridine kinase family. This sequence in the C-terminal section; belongs to the UPRTase family. It depends on Mg(2+) as a cofactor.

The enzyme catalyses UMP + diphosphate = 5-phospho-alpha-D-ribose 1-diphosphate + uracil. It catalyses the reaction cytidine + ATP = CMP + ADP + H(+). The catalysed reaction is uridine + ATP = UMP + ADP + H(+). It functions in the pathway pyrimidine metabolism; UMP biosynthesis via salvage pathway; UMP from uracil: step 1/1. The protein operates within pyrimidine metabolism; CTP biosynthesis via salvage pathway; CTP from cytidine: step 1/3. Its pathway is pyrimidine metabolism; UMP biosynthesis via salvage pathway; UMP from uridine: step 1/1. Its activity is regulated as follows. Allosterically activated by GTP. Involved in the pyrimidine salvage pathway. The polypeptide is Uridine kinase-like protein 5 (UKL5) (Arabidopsis thaliana (Mouse-ear cress)).